A 262-amino-acid polypeptide reads, in one-letter code: Adenosylcobinamide-GDP ribazoletransferase (262 aa).

5 helical membrane-spanning segments follow: residues 41–61, 65–85, 115–132, 134–156, and 195–215; these read AFPL…FILG, ASSL…TGAL, IGTY…LRVS, LAAF…TAAL, and GVLL…AVWL.

The protein belongs to the CobS family. Mg(2+) serves as cofactor.

It localises to the cell inner membrane. The catalysed reaction is alpha-ribazole + adenosylcob(III)inamide-GDP = adenosylcob(III)alamin + GMP + H(+). It catalyses the reaction alpha-ribazole 5'-phosphate + adenosylcob(III)inamide-GDP = adenosylcob(III)alamin 5'-phosphate + GMP + H(+). Its pathway is cofactor biosynthesis; adenosylcobalamin biosynthesis; adenosylcobalamin from cob(II)yrinate a,c-diamide: step 7/7. In terms of biological role, joins adenosylcobinamide-GDP and alpha-ribazole to generate adenosylcobalamin (Ado-cobalamin). Also synthesizes adenosylcobalamin 5'-phosphate from adenosylcobinamide-GDP and alpha-ribazole 5'-phosphate. In Rhizobium meliloti (strain 1021) (Ensifer meliloti), this protein is Adenosylcobinamide-GDP ribazoletransferase.